The chain runs to 840 residues: MTQVTVKELAQVVDTPVERLLLQMRDAGLPHTSAEQVVTDSEKQALLTHLKGSHGDRASEPRKITLQRKTTTTLKVGGSKTVSVEVRKKKTYVKRSPDEIEAERQRELEEQRAAEEAERLKAEEAAARQRAEEEARKAEEAARAKAAQEAAATAGAEPAVVADVAAAEPVAKPAAVEERKKEEPRRAPKRDEDDDRRDRKHTQHRPSVKEKEKVPAPRVAPRSTDEESDGYRRGGRGGKSKLKKRNQHGFQNPTGPIVREVNIGETITVAELAAQMSVKGAEVVKFMFKMGSPVTINQVLDQETAQLVAEELGHKVKLVSENALEEQLAESLKFEGEAVTRAPVVTVMGHVDHGKTSLLDYIRRAKVAAGEAGGITQHIGAYHVETERGMVTFLDTPGHAAFTAMRARGAQATDIVILVVAADDGVMPQTQEAVQHAKAAGVPIVVAVNKIDKPEANPDNIKNGLAALDVIPEEWGGDAPFVPVSAKLGTGVDELLEAVLLQAEVLELKATPSAPGRGVVVESRLDKGRGPVATVLVQDGTLRQGDMVLVGINYGRVRAMLDENGKPIKEAGPSIPVEILGLDGTPDAGDEMTVVADEKKAREVALFRQGKFREVKLARAHAGKLENIFENMGQEEKKTLNIVLKADVRGSLEALQGSLSGLGNDEVQVRVVGGGVGGITESDANLALASNAVLFGFNVRADAGARKIVEAEGLDMRYYNVIYDIIEDVKKALTGMLGSDLRENILGIAEVRDVFRSPKFGAIAGCMVTEGMVHRNRPIRVLRDDVVIFEGELESLRRFKDDVAEVRAGMECGIGVKSYNDVKVGDKIEVFEKVEVARSL.

Disordered stretches follow at residues 94–157 (KRSP…AGAE) and 169–256 (PVAK…PTGP). Positions 95–143 (RSPDEIEAERQRELEEQRAAEEAERLKAEEAAARQRAEEEARKAEEAAR) are enriched in basic and acidic residues. Over residues 144–157 (AKAAQEAAATAGAE) the composition is skewed to low complexity. Composition is skewed to basic and acidic residues over residues 175–191 (AVEERKKEEPRRAPKRD) and 223–232 (STDEESDGYR). Basic residues predominate over residues 233–247 (RGGRGGKSKLKKRNQ). In terms of domain architecture, tr-type G spans 340-509 (TRAPVVTVMG…LLQAEVLELK (170 aa)). The G1 stretch occupies residues 349–356 (GHVDHGKT). GTP is bound at residue 349–356 (GHVDHGKT). The tract at residues 374–378 (GITQH) is G2. A G3 region spans residues 395–398 (DTPG). GTP is bound by residues 395–399 (DTPGH) and 449–452 (NKID). The G4 stretch occupies residues 449–452 (NKID). Residues 485–487 (SAK) are G5.

This sequence belongs to the TRAFAC class translation factor GTPase superfamily. Classic translation factor GTPase family. IF-2 subfamily.

It is found in the cytoplasm. Its function is as follows. One of the essential components for the initiation of protein synthesis. Protects formylmethionyl-tRNA from spontaneous hydrolysis and promotes its binding to the 30S ribosomal subunits. Also involved in the hydrolysis of GTP during the formation of the 70S ribosomal complex. The polypeptide is Translation initiation factor IF-2 (Pseudomonas aeruginosa (strain UCBPP-PA14)).